A 352-amino-acid chain; its full sequence is NAD(P)H pyrophosphatase NUDT13, mitochondrial (352 aa).

The N-terminal 20 residues, 1-20 (MSLYCRTFFRRKSFGCYRLL), are a transit peptide targeting the mitochondrion. One can recognise a Nudix hydrolase domain in the interval 196-323 (PQMAPVVITL…SLALQPSEAS (128 aa)). Residues 216 to 240 (RQSSFPKGLYSALAGFCDIGESVEE) carry the Nudix box motif.

The protein belongs to the Nudix hydrolase family. The cofactor is Mg(2+). It depends on Mn(2+) as a cofactor.

The protein resides in the mitochondrion. The catalysed reaction is NADH + H2O = reduced beta-nicotinamide D-ribonucleotide + AMP + 2 H(+). It carries out the reaction NAD(+) + H2O = beta-nicotinamide D-ribonucleotide + AMP + 2 H(+). It catalyses the reaction NADPH + H2O = reduced beta-nicotinamide D-ribonucleotide + adenosine 2',5'-bisphosphate + 2 H(+). NAD(P)H pyrophosphatase that hydrolyzes NADH into NMNH and AMP, and NADPH into NMNH and 2',5'-ADP. Has a marked preference for the reduced pyridine nucleotides. Does not show activity toward NAD-capped RNAs; the NAD-cap is an atypical cap present at the 5'-end of some RNAs. This chain is NAD(P)H pyrophosphatase NUDT13, mitochondrial, found in Mus musculus (Mouse).